Here is a 340-residue protein sequence, read N- to C-terminus: uncharacterized protein (340 aa).

The first 23 residues, 1–23, serve as a signal peptide directing secretion; that stretch reads MQKKVLSLVLVLAVLESIVPVSA.

This is an uncharacterized protein from Archaeoglobus fulgidus (strain ATCC 49558 / DSM 4304 / JCM 9628 / NBRC 100126 / VC-16).